Consider the following 186-residue polypeptide: Mediator of RNA polymerase II transcription subunit 29 (186 aa).

Residues 1–12 (MAMLLNQAQPPQ) are compositionally biased toward polar residues. The interval 1–41 (MAMLLNQAQPPQTRDGGGTQGASLGPGVPVGQQQLGLQQQQ) is disordered. Positions 25 to 41 (GPGVPVGQQQLGLQQQQ) are enriched in low complexity.

Belongs to the Mediator complex subunit 29 family. Component of the Mediator complex.

It is found in the nucleus. In terms of biological role, component of the Mediator complex, a coactivator involved in the regulated transcription of nearly all RNA polymerase II-dependent genes. Mediator functions as a bridge to convey information from gene-specific regulatory proteins to the basal RNA polymerase II transcription machinery. Mediator is recruited to promoters by direct interactions with regulatory proteins and serves as a scaffold for the assembly of a functional preinitiation complex with RNA polymerase II and the general transcription factors. This chain is Mediator of RNA polymerase II transcription subunit 29 (med29), found in Xenopus laevis (African clawed frog).